A 323-amino-acid polypeptide reads, in one-letter code: GTP 3',8-cyclase (323 aa).

The Radical SAM core domain occupies 4–228 (KYGRSIDYLR…VPVNIQNNGP (225 aa)). Arg13 contacts GTP. 2 residues coordinate [4Fe-4S] cluster: Cys20 and Cys24. Tyr26 serves as a coordination point for S-adenosyl-L-methionine. Cys27 is a binding site for [4Fe-4S] cluster. Arg63 provides a ligand contact to GTP. Gly67 contacts S-adenosyl-L-methionine. Thr94 provides a ligand contact to GTP. An S-adenosyl-L-methionine-binding site is contributed by Ser118. Position 155 (Lys155) interacts with GTP. Met189 lines the S-adenosyl-L-methionine pocket. Positions 252 and 255 each coordinate [4Fe-4S] cluster. A GTP-binding site is contributed by 257 to 259 (RMR). Residue Cys269 coordinates [4Fe-4S] cluster.

The protein belongs to the radical SAM superfamily. MoaA family. Monomer and homodimer. [4Fe-4S] cluster serves as cofactor.

The enzyme catalyses GTP + AH2 + S-adenosyl-L-methionine = (8S)-3',8-cyclo-7,8-dihydroguanosine 5'-triphosphate + 5'-deoxyadenosine + L-methionine + A + H(+). Its pathway is cofactor biosynthesis; molybdopterin biosynthesis. Catalyzes the cyclization of GTP to (8S)-3',8-cyclo-7,8-dihydroguanosine 5'-triphosphate. This chain is GTP 3',8-cyclase, found in Petrotoga mobilis (strain DSM 10674 / SJ95).